The chain runs to 198 residues: MGLNPTQVSTSGSPQVSQPATGVLDPRTGQPVGADDRYFLEINHELSDKGFFVAAADDLITWARTGSLMWMTFGLACCAVEMMQVSMPRYDVERFGFAPRASPRQSDVMIVAGTLTNKMAPALRKVYDQMPEPRYVISMGSCANGGGYYHYSYSVVRGCDRIVPVDIYVPGCPPTAEALLYGVLLLQKKIRRIGTIER.

Over residues 1 to 20 the composition is skewed to polar residues; it reads MGLNPTQVSTSGSPQVSQPA. Residues 1–29 are disordered; sequence MGLNPTQVSTSGSPQVSQPATGVLDPRTG. Positions 77, 78, 142, and 172 each coordinate [4Fe-4S] cluster.

The protein belongs to the complex I 20 kDa subunit family. In terms of assembly, NDH-1 is composed of 14 different subunits. Subunits NuoB, C, D, E, F, and G constitute the peripheral sector of the complex. It depends on [4Fe-4S] cluster as a cofactor.

It localises to the cell inner membrane. It carries out the reaction a quinone + NADH + 5 H(+)(in) = a quinol + NAD(+) + 4 H(+)(out). Functionally, NDH-1 shuttles electrons from NADH, via FMN and iron-sulfur (Fe-S) centers, to quinones in the respiratory chain. The immediate electron acceptor for the enzyme in this species is believed to be ubiquinone. Couples the redox reaction to proton translocation (for every two electrons transferred, four hydrogen ions are translocated across the cytoplasmic membrane), and thus conserves the redox energy in a proton gradient. The chain is NADH-quinone oxidoreductase subunit B from Afipia carboxidovorans (strain ATCC 49405 / DSM 1227 / KCTC 32145 / OM5) (Oligotropha carboxidovorans).